A 245-amino-acid chain; its full sequence is Biosynthetic peptidoglycan transglycosylase (245 aa).

A helical transmembrane segment spans residues 29–49 (LLVAFLILSLVLVATVSVINP).

The protein belongs to the glycosyltransferase 51 family.

Its subcellular location is the cell inner membrane. The catalysed reaction is [GlcNAc-(1-&gt;4)-Mur2Ac(oyl-L-Ala-gamma-D-Glu-L-Lys-D-Ala-D-Ala)](n)-di-trans,octa-cis-undecaprenyl diphosphate + beta-D-GlcNAc-(1-&gt;4)-Mur2Ac(oyl-L-Ala-gamma-D-Glu-L-Lys-D-Ala-D-Ala)-di-trans,octa-cis-undecaprenyl diphosphate = [GlcNAc-(1-&gt;4)-Mur2Ac(oyl-L-Ala-gamma-D-Glu-L-Lys-D-Ala-D-Ala)](n+1)-di-trans,octa-cis-undecaprenyl diphosphate + di-trans,octa-cis-undecaprenyl diphosphate + H(+). The protein operates within cell wall biogenesis; peptidoglycan biosynthesis. Its function is as follows. Peptidoglycan polymerase that catalyzes glycan chain elongation from lipid-linked precursors. The polypeptide is Biosynthetic peptidoglycan transglycosylase (Shewanella amazonensis (strain ATCC BAA-1098 / SB2B)).